We begin with the raw amino-acid sequence, 444 residues long: Phosphoglucosamine mutase (444 aa).

The Phosphoserine intermediate role is filled by Ser102. Mg(2+) is bound by residues Ser102, Asp239, Asp241, and Asp243. The residue at position 102 (Ser102) is a Phosphoserine.

The protein belongs to the phosphohexose mutase family. It depends on Mg(2+) as a cofactor. Post-translationally, activated by phosphorylation.

The enzyme catalyses alpha-D-glucosamine 1-phosphate = D-glucosamine 6-phosphate. In terms of biological role, catalyzes the conversion of glucosamine-6-phosphate to glucosamine-1-phosphate. The protein is Phosphoglucosamine mutase of Mycolicibacterium paratuberculosis (strain ATCC BAA-968 / K-10) (Mycobacterium paratuberculosis).